Here is a 316-residue protein sequence, read N- to C-terminus: Melanocyte-stimulating hormone receptor (316 aa).

The Extracellular segment spans residues 1-37; the sequence is MAVQGSQRRLLGSLNSTPTAIPQLGLAANQTGARCLE. Asn-29 carries N-linked (GlcNAc...) asparagine glycosylation. The helical transmembrane segment at 38-63 threads the bilayer; the sequence is VSIPDGLFLSLGLVSLVENVLVVATI. At 64-72 the chain is on the cytoplasmic side; that stretch reads AKNRNLHSP. Residues 73–93 traverse the membrane as a helical segment; it reads MYCFICCLALSDLLVSGSNVV. The Extracellular portion of the chain corresponds to 94–117; it reads DTLLLLLEAGALAARAAVLQQLDN. The chain crosses the membrane as a helical span at residues 118–139; sequence VIDVITCSSMLSSLCFLGAIAV. The Cytoplasmic segment spans residues 140–162; that stretch reads DRYISIFYALRYRSIVTLPRARR. The chain crosses the membrane as a helical span at residues 163 to 182; the sequence is AVAAIWVASVLFSTLFIAYY. At 183 to 190 the chain is on the extracellular side; sequence DHTAVLLC. A helical transmembrane segment spans residues 191-210; sequence LVVFFLAMLVLMAVLYVHML. Residues 211–239 are Cytoplasmic-facing; sequence ARACQHAQGIARLHKRQRPVHKGFGLKGP. The chain crosses the membrane as a helical span at residues 240 to 265; the sequence is VTLTILLGIFFLCWGPFFLHLTLIVL. Residues 266 to 278 lie on the Extracellular side of the membrane; the sequence is CPEHPTCGCIFKN. The helical transmembrane segment at 279–299 threads the bilayer; sequence FNLFLALIICNAIIDPLIYAF. Residues 300-316 are Cytoplasmic-facing; sequence HSQELRRTLKEVLTCSW. Cys-314 is lipidated: S-palmitoyl cysteine.

The protein belongs to the G-protein coupled receptor 1 family. In terms of assembly, interacts with MGRN1, but does not undergo MGRN1-mediated ubiquitination; this interaction competes with GNAS-binding and thus inhibits agonist-induced cAMP production. Interacts with OPN3; the interaction results in a decrease in MC1R-mediated cAMP signaling and ultimately a decrease in melanin production in melanocytes.

Its subcellular location is the cell membrane. Receptor for MSH (alpha, beta and gamma) and ACTH. The activity of this receptor is mediated by G proteins which activate adenylate cyclase. Mediates melanogenesis, the production of eumelanin (black/brown) and phaeomelanin (red/yellow), via regulation of cAMP signaling in melanocytes. This chain is Melanocyte-stimulating hormone receptor (MC1R), found in Gorilla gorilla gorilla (Western lowland gorilla).